Consider the following 30-residue polypeptide: Dermaseptin-J10 (30 aa).

As to expression, expressed by the skin glands.

Its subcellular location is the secreted. Its function is as follows. Has antimicrobial activity. This chain is Dermaseptin-J10, found in Phasmahyla jandaia (Jandaia leaf frog).